Reading from the N-terminus, the 180-residue chain is Probable Brix domain-containing ribosomal biogenesis protein (180 aa).

The 178-residue stretch at 1–178 (MTTSRRPSPR…KPAEMVKRGR (178 aa)) folds into the Brix domain.

In terms of biological role, probably involved in the biogenesis of the ribosome. The sequence is that of Probable Brix domain-containing ribosomal biogenesis protein from Aeropyrum pernix (strain ATCC 700893 / DSM 11879 / JCM 9820 / NBRC 100138 / K1).